The primary structure comprises 235 residues: Small ribosomal subunit protein eS4 (235 aa).

The S4 RNA-binding domain maps to 38 to 99; sequence VTLLTIIRDY…GESYRVVYNN (62 aa).

Belongs to the eukaryotic ribosomal protein eS4 family.

The polypeptide is Small ribosomal subunit protein eS4 (rps4e) (Thermoplasma volcanium (strain ATCC 51530 / DSM 4299 / JCM 9571 / NBRC 15438 / GSS1)).